Consider the following 550-residue polypeptide: Beta-fructofuranosidase, insoluble isoenzyme CWINV6 (550 aa).

Substrate-binding positions include 28 to 31, glutamine 47, 92 to 93, 157 to 158, and glutamate 214; these read WLND, WS, and RD. The active site involves aspartate 31. N-linked (GlcNAc...) asparagine glycosylation is found at asparagine 235 and asparagine 272.

It belongs to the glycosyl hydrolase 32 family. In terms of tissue distribution, expressed in seedlings and leaves, and, to a lower extent, in flowers and seeds.

The protein localises to the secreted. Its subcellular location is the extracellular space. The protein resides in the apoplast. It localises to the cell wall. It catalyses the reaction Hydrolysis of terminal, non-reducing (2-&gt;1)- and (2-&gt;6)-linked beta-D-fructofuranose residues in fructans.. In terms of biological role, 6 and 1-fructan exohydrolase that can degrade both inulin and levan-type fructans, such as phlein, levan, neokestose, levanbiose, 6-kestose, 1-kestose, inulin, and 1,1-nystose. The polypeptide is Beta-fructofuranosidase, insoluble isoenzyme CWINV6 (CWINV6) (Arabidopsis thaliana (Mouse-ear cress)).